Reading from the N-terminus, the 276-residue chain is NAD-capped RNA hydrolase NudC (276 aa).

Residue Arg-82 coordinates substrate. Zn(2+) contacts are provided by Cys-112 and Cys-115. Substrate is bound at residue Glu-125. Residues Cys-130 and Cys-133 each coordinate Zn(2+). Residue Tyr-138 coordinates substrate. Residues 139–262 (PRISPSMIVL…SIARYLIDLY (124 aa)) form the Nudix hydrolase domain. A divalent metal cation is bound by residues Ala-172, Glu-188, and Glu-192. The Nudix box signature appears at 173–194 (GFAEPGESAEDCLIREVREEVS). Substrate is bound at residue 206–213 (QCWPFPHS). An a divalent metal cation-binding site is contributed by Glu-233. Ala-255 serves as a coordination point for substrate.

Belongs to the Nudix hydrolase family. NudC subfamily. As to quaternary structure, homodimer. It depends on Mg(2+) as a cofactor. Mn(2+) is required as a cofactor. Requires Zn(2+) as cofactor.

It carries out the reaction a 5'-end NAD(+)-phospho-ribonucleoside in mRNA + H2O = a 5'-end phospho-adenosine-phospho-ribonucleoside in mRNA + beta-nicotinamide D-ribonucleotide + 2 H(+). The catalysed reaction is NAD(+) + H2O = beta-nicotinamide D-ribonucleotide + AMP + 2 H(+). The enzyme catalyses NADH + H2O = reduced beta-nicotinamide D-ribonucleotide + AMP + 2 H(+). MRNA decapping enzyme that specifically removes the nicotinamide adenine dinucleotide (NAD) cap from a subset of mRNAs by hydrolyzing the diphosphate linkage to produce nicotinamide mononucleotide (NMN) and 5' monophosphate mRNA. The NAD-cap is present at the 5'-end of some mRNAs and stabilizes RNA against 5'-processing. Has preference for mRNAs with a 5'-end purine. Catalyzes the hydrolysis of a broad range of dinucleotide pyrophosphates. The polypeptide is NAD-capped RNA hydrolase NudC (Pseudomonas fluorescens (strain ATCC BAA-477 / NRRL B-23932 / Pf-5)).